We begin with the raw amino-acid sequence, 249 residues long: tRNA (guanine-N(1)-)-methyltransferase (249 aa).

S-adenosyl-L-methionine contacts are provided by residues Gly-113 and 133–138 (IGDFVL).

It belongs to the RNA methyltransferase TrmD family. As to quaternary structure, homodimer.

The protein localises to the cytoplasm. It carries out the reaction guanosine(37) in tRNA + S-adenosyl-L-methionine = N(1)-methylguanosine(37) in tRNA + S-adenosyl-L-homocysteine + H(+). Its function is as follows. Specifically methylates guanosine-37 in various tRNAs. The chain is tRNA (guanine-N(1)-)-methyltransferase from Photobacterium profundum (strain SS9).